The sequence spans 154 residues: Mediator of RNA polymerase II transcription subunit 21 (154 aa).

The segment at 37–71 (GFERTGSQTPQQQVHQQQQLPQQQQQQQQPQQQED) is disordered. Low complexity predominate over residues 44–71 (QTPQQQVHQQQQLPQQQQQQQQPQQQED). Positions 96 to 140 (SEESSIELQVQSLQRLEAENKESAEKLEEIVRKGELLLEKIQAAL) form a coiled coil.

It belongs to the Mediator complex subunit 21 family. Component of the Mediator complex.

The protein resides in the nucleus. Its function is as follows. Component of the Mediator complex, a coactivator involved in the regulated transcription of nearly all RNA polymerase II-dependent genes. Mediator functions as a bridge to convey information from gene-specific regulatory proteins to the basal RNA polymerase II transcription machinery. Mediator is recruited to promoters by direct interactions with regulatory proteins and serves as a scaffold for the assembly of a functional preinitiation complex with RNA polymerase II and the general transcription factors. The chain is Mediator of RNA polymerase II transcription subunit 21 (MED21) from Anopheles gambiae (African malaria mosquito).